The sequence spans 95 residues: Protein Vpr (95 aa).

The interval 1 to 42 (MERAPEDAGPQREPYNEWALELLEELKNEAVRHFPRIWLHGL) is homooligomerization. 3 positions are modified to phosphoserine; by host: serine 79, serine 93, and serine 95.

It belongs to the HIV-1 VPR protein family. Homooligomer, may form homodimer. Interacts with p6-gag region of the Pr55 Gag precursor protein through a (Leu-X-X)4 motif near the C-terminus of the P6gag protein. Interacts with host UNG. May interact with host RAD23A/HHR23A. Interacts with host VPRBP/DCAF1, leading to hijack the CUL4A-RBX1-DDB1-DCAF1/VPRBP complex, mediating ubiquitination of host proteins such as TERT and ZGPAT and arrest of the cell cycle in G2 phase. Post-translationally, phosphorylated on several residues by host. These phosphorylations regulate VPR activity for the nuclear import of the HIV-1 pre-integration complex.

It localises to the virion. It is found in the host nucleus. The protein localises to the host extracellular space. Its function is as follows. During virus replication, may deplete host UNG protein, and incude G2-M cell cycle arrest. Acts by targeting specific host proteins for degradation by the 26S proteasome, through association with the cellular CUL4A-DDB1 E3 ligase complex by direct interaction with host VPRPB/DCAF-1. Cell cycle arrest reportedly occurs within hours of infection and is not blocked by antiviral agents, suggesting that it is initiated by the VPR carried into the virion. Additionally, VPR induces apoptosis in a cell cycle dependent manner suggesting that these two effects are mechanistically linked. Detected in the serum and cerebrospinal fluid of AIDS patient, VPR may also induce cell death to bystander cells. In terms of biological role, during virus entry, plays a role in the transport of the viral pre-integration (PIC) complex to the host nucleus. This function is crucial for viral infection of non-dividing macrophages. May act directly at the nuclear pore complex, by binding nucleoporins phenylalanine-glycine (FG)-repeat regions. This Human immunodeficiency virus type 1 group N (isolate YBF30) (HIV-1) protein is Protein Vpr.